The primary structure comprises 421 residues: Synaptotagmin-1 (421 aa).

Residues 1–57 (MVSASRPEALAAPVTTVATLVPHNATEPASPGEGKEDAFSKLKQKFMNELHKIPLPP) are Vesicular-facing. Asparagine 24 carries N-linked (GlcNAc...) asparagine glycosylation. The helical transmembrane segment at 58–79 (WALIAIAIVAVLLVVTCCFCVC) threads the bilayer. Residues cysteine 74, cysteine 75, cysteine 77, cysteine 79, and cysteine 82 are each lipidated (S-palmitoyl cysteine). Over 80–421 (KKCLFKKKNK…EVDAMLAVKK (342 aa)) the chain is Cytoplasmic. The tract at residues 112 to 141 (TMKDQALKDDDAETGLTDGEEKEEPKEEEK) is disordered. Over residues 121 to 133 (DDAETGLTDGEEK) the composition is skewed to acidic residues. Threonine 128 bears the Phosphothreonine mark. The segment at 135–381 (EPKEEEKLGK…AIGKVFVGYN (247 aa)) is phospholipid binding. The C2 1 domain maps to 141–260 (KLGKLQYSLD…DFGHVTEEWR (120 aa)). Residues leucine 171, aspartate 172, and aspartate 178 each contribute to the Ca(2+) site. Tyrosine 229 is subject to Phosphotyrosine. 6 residues coordinate Ca(2+): aspartate 230, phenylalanine 231, aspartate 232, serine 235, lysine 236, and aspartate 238. Serine 264 bears the Phosphoserine mark. The C2 2 domain maps to 272–405 (KLGDICFSLR…NPRRPIAQWH (134 aa)). Ca(2+) contacts are provided by aspartate 303 and aspartate 309. Residues serine 342 and serine 344 each carry the phosphoserine modification. 3 residues coordinate Ca(2+): aspartate 363, aspartate 365, and aspartate 371.

This sequence belongs to the synaptotagmin family. Homotetramer. Heterodimer; heterodimerizes with SYT2 in presence of calcium. Interacts with SCAMP5. Interacts with STON2. Forms a complex with SV2B, syntaxin 1 and SNAP25. Interacts with SV2A, SV2B and SV2C. Interacts with RIMS1. Interacts with PRRT2. Interacts with DNAJC5 in a phosphorylation-dependent manner. Interacts (via N-terminus) with RAB3A. Interacts with SYT12. Interacts with calmodulin. Interacts with DNM1 (via C-terminal proline-rich domain (PRD)); this interaction facilitates vesicle fission during clathrin-mediated endocytosis (CME). Ca(2+) serves as cofactor. Glycosylated. In terms of tissue distribution, expressed in the brain and adrenal medulla (at protein level).

Its subcellular location is the cytoplasmic vesicle. It is found in the secretory vesicle membrane. The protein localises to the secretory vesicle. It localises to the synaptic vesicle membrane. The protein resides in the chromaffin granule membrane. Its subcellular location is the cytoplasm. Its function is as follows. Calcium sensor that participates in triggering neurotransmitter release at the synapse. May have a regulatory role in the membrane interactions during trafficking of synaptic vesicles at the active zone of the synapse. It binds acidic phospholipids with a specificity that requires the presence of both an acidic head group and a diacyl backbone. A Ca(2+)-dependent interaction between synaptotagmin and putative receptors for activated protein kinase C has also been reported. It can bind to at least three additional proteins in a Ca(2+)-independent manner; these are neurexins, syntaxin and AP2. Plays a role in dendrite formation by melanocytes. This Mus musculus (Mouse) protein is Synaptotagmin-1.